Consider the following 227-residue polypeptide: Ribose-5-phosphate isomerase A (227 aa).

Substrate-binding positions include 26–29, 82–85, and 95–98; these read TGST, DGAD, and KGGG. Catalysis depends on E104, which acts as the Proton acceptor. Position 122 (K122) interacts with substrate.

The protein belongs to the ribose 5-phosphate isomerase family. Homodimer.

It carries out the reaction aldehydo-D-ribose 5-phosphate = D-ribulose 5-phosphate. It functions in the pathway carbohydrate degradation; pentose phosphate pathway; D-ribose 5-phosphate from D-ribulose 5-phosphate (non-oxidative stage): step 1/1. Its function is as follows. Catalyzes the reversible conversion of ribose-5-phosphate to ribulose 5-phosphate. This is Ribose-5-phosphate isomerase A from Streptococcus pyogenes serotype M5 (strain Manfredo).